We begin with the raw amino-acid sequence, 299 residues long: UDP-N-acetylenolpyruvoylglucosamine reductase (299 aa).

The region spanning 29–193 (RIGGPAEIFL…TAASLRFRKA (165 aa)) is the FAD-binding PCMH-type domain. The active site involves Arg-173. The active-site Proton donor is Ser-222. Residue Glu-292 is part of the active site.

The protein belongs to the MurB family. Requires FAD as cofactor.

Its subcellular location is the cytoplasm. The enzyme catalyses UDP-N-acetyl-alpha-D-muramate + NADP(+) = UDP-N-acetyl-3-O-(1-carboxyvinyl)-alpha-D-glucosamine + NADPH + H(+). It functions in the pathway cell wall biogenesis; peptidoglycan biosynthesis. In terms of biological role, cell wall formation. The sequence is that of UDP-N-acetylenolpyruvoylglucosamine reductase from Syntrophotalea carbinolica (strain DSM 2380 / NBRC 103641 / GraBd1) (Pelobacter carbinolicus).